Here is a 683-residue protein sequence, read N- to C-terminus: DNA-directed RNA polymerase subunit beta' (683 aa).

4 residues coordinate Zn(2+): Cys69, Cys71, Cys87, and Cys90. Mg(2+)-binding residues include Asp489, Asp491, and Asp493.

This sequence belongs to the RNA polymerase beta' chain family. RpoC1 subfamily. In terms of assembly, in plastids the minimal PEP RNA polymerase catalytic core is composed of four subunits: alpha, beta, beta', and beta''. When a (nuclear-encoded) sigma factor is associated with the core the holoenzyme is formed, which can initiate transcription. Mg(2+) is required as a cofactor. It depends on Zn(2+) as a cofactor.

The protein localises to the plastid. The protein resides in the chloroplast. The catalysed reaction is RNA(n) + a ribonucleoside 5'-triphosphate = RNA(n+1) + diphosphate. DNA-dependent RNA polymerase catalyzes the transcription of DNA into RNA using the four ribonucleoside triphosphates as substrates. The polypeptide is DNA-directed RNA polymerase subunit beta' (Saccharum hybrid (Sugarcane)).